We begin with the raw amino-acid sequence, 123 residues long: Small ribosomal subunit protein uS12 (123 aa).

Asp-89 carries the 3-methylthioaspartic acid modification. Residues 104-123 (SVGVKDRKKSRSKYGAKRPK) form a disordered region. Residues 109-123 (DRKKSRSKYGAKRPK) show a composition bias toward basic residues.

The protein belongs to the universal ribosomal protein uS12 family. In terms of assembly, part of the 30S ribosomal subunit. Contacts proteins S8 and S17. May interact with IF1 in the 30S initiation complex.

In terms of biological role, with S4 and S5 plays an important role in translational accuracy. Functionally, interacts with and stabilizes bases of the 16S rRNA that are involved in tRNA selection in the A site and with the mRNA backbone. Located at the interface of the 30S and 50S subunits, it traverses the body of the 30S subunit contacting proteins on the other side and probably holding the rRNA structure together. The combined cluster of proteins S8, S12 and S17 appears to hold together the shoulder and platform of the 30S subunit. The sequence is that of Small ribosomal subunit protein uS12 from Geotalea daltonii (strain DSM 22248 / JCM 15807 / FRC-32) (Geobacter daltonii).